Reading from the N-terminus, the 487-residue chain is MGCEVSKLSALCCVSESGRSNPDVTGLDEEGRGESNDLPQFREFSIETIRNATSGFAAENIVSEHGERAPNVVYKGKLENQRRIAVKRFNRKSWPDSRQFLEEAKAVGQLRNHRMANLLGCCYEDEERLLIAEFMPNETLAKHLFHWESQPMKWAMRLRVALHIAQALEYCTSKGRALYHDLNAYRVLFDDDANPRLSCFGLMKNSRDGKSYSTNLAFTPPEYLRTGRVTPESVIYSFGTLLLDLLSGKHIPPSHALDLIRDRNIQMLMDSGLEGQFSSDDGTELIRLASRCLQYEPRERPNPKSLVSAMIPLQKDLEIASHQLLGVPNSATTTALSPLGEACLRSDLTAIHEIIEKLGYKDDEGATTELSFQMWTDQMQDTLVFKKKGDSAFRHKDFAKAIECYSQFIEVGTMGSPTVHARQSLCYLMNDMPREALNNAMQAQVISPAWHIASYLQAVALSALGQENEAHTALKDGAMLESKRNPL.

Residue glycine 2 is the site of N-myristoyl glycine attachment. At serine 20 the chain carries Phosphoserine. In terms of domain architecture, Protein kinase spans 59 to 325 (ENIVSEHGER…DLEIASHQLL (267 aa)). Residues 65 to 73 (HGERAPNVV), asparagine 71, lysine 87, and 133 to 135 (EFM) contribute to the ATP site. Aspartate 181 (proton acceptor) is an active-site residue. Residues 185–186 (YR) and asparagine 205 each bind ATP. At serine 213 the chain carries Phosphoserine.

The protein belongs to the protein kinase superfamily. Ser/Thr protein kinase family. In terms of assembly, interacts with ASK7/BIN2, BSK1, BSK5, BSK6 and BSK11. Interacts with BSL2. Post-translationally, phosphorylated by BRI1, ASK7/BIN2 and ASK9/BIL2.

The protein localises to the cell membrane. The enzyme catalyses L-seryl-[protein] + ATP = O-phospho-L-seryl-[protein] + ADP + H(+). It carries out the reaction L-threonyl-[protein] + ATP = O-phospho-L-threonyl-[protein] + ADP + H(+). Its function is as follows. Probable serine/threonine kinase that acts as a positive regulator of brassinosteroid (BR) signaling downstream of the receptor kinase BRI1. Functions redundantly with BSK3, BSK4, BSK6 and BSK7. Involved in the regulation of sucrose-phosphate synthase 1 (SPS1) in the context of sucrose resuply after starvation. Activates BSL2, a phosphatase that may dephosphorylate SPS1, leading to the activation of SPS1. The polypeptide is Serine/threonine-protein kinase BSK8 (Arabidopsis thaliana (Mouse-ear cress)).